Reading from the N-terminus, the 87-residue chain is Putative regulatory protein GWCH70_1057 (87 aa).

It belongs to the RemA family.

This Geobacillus sp. (strain WCH70) protein is Putative regulatory protein GWCH70_1057.